The sequence spans 603 residues: Elongation factor 4 (603 aa).

A tr-type G domain is found at 2 to 184 (NHIRNFSIIA…AIVHKMPAPR (183 aa)). GTP is bound by residues 14–19 (DHGKST) and 131–134 (NKMD).

Belongs to the TRAFAC class translation factor GTPase superfamily. Classic translation factor GTPase family. LepA subfamily.

The protein resides in the cell inner membrane. It carries out the reaction GTP + H2O = GDP + phosphate + H(+). Required for accurate and efficient protein synthesis under certain stress conditions. May act as a fidelity factor of the translation reaction, by catalyzing a one-codon backward translocation of tRNAs on improperly translocated ribosomes. Back-translocation proceeds from a post-translocation (POST) complex to a pre-translocation (PRE) complex, thus giving elongation factor G a second chance to translocate the tRNAs correctly. Binds to ribosomes in a GTP-dependent manner. This is Elongation factor 4 from Variovorax paradoxus (strain S110).